Consider the following 309-residue polypeptide: MSIRIIPQDELGSSEKRTAEAIPPLLFPRLKNLYNRRAERLRELAANNPLGDYLRFAALIAHAQEVVLYDHPLQMDLTARIKAASEQGKPPLDIHVLPRDKHWHKLLHSLIAELKPEMSGPALAVIENLEKASEQELEQMASALFVSDFASVSSDKAPFIWAALSLYWAQMASLIPGKARAEYGEQRQFCPVCGSMPVSSIVQIGTTQGLRYLHCNLCETEWHVVRVKCSNCEQSRDLHYWSLDNEQAAVKAESCGDCGTYLKIMYQEKDPKVEAVADDLASLVLDARMEQEGFARSSINPFMFPGEGE.

This sequence belongs to the FdhE family.

The protein localises to the cytoplasm. Functionally, necessary for formate dehydrogenase activity. The polypeptide is Protein FdhE homolog (Klebsiella pneumoniae (strain 342)).